We begin with the raw amino-acid sequence, 465 residues long: MFRLKTLPLLIFLHTQLANAFPVPEHLEEKNIKTAENYLRKFYNLPSNQFRSSRNATMVAEKLKEMQRFFSLAETGKLDAATMGIMEMPRCGVPDSGDFLLTPGSPKWTHTNLTYRIINHTPQLSRAEVKTAIEKAFHVWSVASPLTFTEILQGEADINIAFVSRDHGDNSPFDGPNGILAHAFQPGQGIGGDAHFDSEETWTQDSKNYNLFLVAAHEFGHSLGLSHSTDPGALMYPNYAYREPSTYSLPQDDINGIQTIYGPSDNPIQPTGPSTPKACDPHLRFDATTTLRGEIYFFKDKYFWRRHPQLRTVDLNFISLFWPFLPNGLQAAYEDFDRDLVFLFKGRQYWALSGYDLQQGYPRDISNYGFPRSVQAIDAAVSYNGKTYFFINNQCWRYDNQRRSMDPGYPKSIPSMFPGVNCRVDAVFLQDSFFLFFSGPQYFAFNFVSHRVTRVARSNLWLNCS.

The first 20 residues, 1 to 20 (MFRLKTLPLLIFLHTQLANA), serve as a signal peptide directing secretion. Positions 21–100 (FPVPEHLEEK…CGVPDSGDFL (80 aa)) are cleaved as a propeptide — activation peptide. Asparagine 55 carries an N-linked (GlcNAc...) asparagine glycan. Positions 89 to 96 (PRCGVPDS) match the Cysteine switch motif. Cysteine 91 is a binding site for Zn(2+). Asparagine 112 carries an N-linked (GlcNAc...) asparagine glycan. Aspartate 157 contacts Ca(2+). Zn(2+)-binding residues include histidine 167 and aspartate 169. Residues aspartate 174, glycine 175, asparagine 177, and isoleucine 179 each coordinate Ca(2+). Histidine 182 is a Zn(2+) binding site. Ca(2+) contacts are provided by glycine 189, glycine 191, and aspartate 193. Histidine 195 serves as a coordination point for Zn(2+). Residues aspartate 197 and glutamate 200 each contribute to the Ca(2+) site. Histidine 217 is a binding site for Zn(2+). Glutamate 218 is an active-site residue. The Zn(2+) site is built by histidine 221 and histidine 227. Hemopexin repeat units follow at residues 276–325 (PKAC…WPFL), 326–372 (PNGL…GFPR), 374–420 (VQAI…FPGV), and 421–464 (NCRV…WLNC). Cysteine 279 and cysteine 464 are disulfide-bonded. Aspartate 286 contributes to the Ca(2+) binding site. The Ca(2+) site is built by aspartate 378 and aspartate 425.

The protein belongs to the peptidase M10A family. The cofactor is Ca(2+). Zn(2+) serves as cofactor. In terms of tissue distribution, neutrophils. Expressed in uterus. Low levels in kidney and muscle.

The protein localises to the cytoplasmic granule. The protein resides in the secreted. It localises to the extracellular space. It is found in the extracellular matrix. The catalysed reaction is Cleavage of interstitial collagens in the triple helical domain. Unlike EC 3.4.24.7, this enzyme cleaves type III collagen more slowly than type I.. Its activity is regulated as follows. Cannot be activated without removal of the activation peptide. Activated by matrilysin. In terms of biological role, can degrade fibrillar type I, II, and III collagens. May play a role in the degradation of collagen fibers during uterine involution. The polypeptide is Neutrophil collagenase (Mmp8) (Mus musculus (Mouse)).